The primary structure comprises 324 residues: Sperm acrosome membrane-associated protein 6 (324 aa).

The first 26 residues, 1-26 (MALLALASAVPSALLALAVFRVPAWA), serve as a signal peptide directing secretion. Residues 27-30 (CLLC) carry the CXXC motif motif. 6 disulfide bridges follow: cysteine 27–cysteine 139, cysteine 30–cysteine 142, cysteine 41–cysteine 55, cysteine 124–cysteine 147, cysteine 128–cysteine 153, and cysteine 170–cysteine 226. Over 27–295 (CLLCFTTYSE…RPEALTPSNL (269 aa)) the chain is Extracellular. Positions 139–142 (CSGC) match the CXXC motif motif. The Ig-like domain maps to 150–236 (PLDCPVQDVT…VIKQDQRPLA (87 aa)). Asparagine 243 carries N-linked (GlcNAc...) asparagine glycosylation. The helical transmembrane segment at 296–316 (FLLAVLGALASASATVLAWMF) threads the bilayer. Topologically, residues 317 to 324 (FRWYCSGN) are cytoplasmic.

This sequence belongs to the SPACA6 family. In terms of assembly, forms a complex with IZUMO1 and TMEM81 on spermatocyte cell membrane required for fertilization. Detected at the sperm head, equatorial region, neck and midpiece (at protein level). Expressed in testis.

It is found in the cytoplasmic vesicle. The protein resides in the secretory vesicle. It localises to the acrosome membrane. Functionally, sperm protein required for fusion of sperm with the egg membrane during fertilization. May regulate the expression of sperm surface protein DCST2. The chain is Sperm acrosome membrane-associated protein 6 from Homo sapiens (Human).